A 222-amino-acid chain; its full sequence is Riboflavin kinase (222 aa).

The segment at 1 to 92 (MVEAEDLQSL…VRIFNPDQRG (92 aa)) is unknown. Residues 93-222 (YTLTGTVISG…DTIEVEITHD (130 aa)) are riboflavin kinase. Residue 102–107 (GLGEGR) participates in CDP binding. Mg(2+) contacts are provided by Thr131 and Asn133. FMN contacts are provided by Thr188 and Glu196. 201 to 204 (CELR) is a binding site for CDP.

The protein belongs to the archaeal riboflavin kinase family. Mg(2+) is required as a cofactor.

The catalysed reaction is riboflavin + CTP = CDP + FMN + H(+). It functions in the pathway cofactor biosynthesis; FMN biosynthesis; FMN from riboflavin (CTP route): step 1/1. In terms of biological role, catalyzes the CTP-dependent phosphorylation of riboflavin (vitamin B2) to form flavin mononucleotide (FMN). This Methanoculleus marisnigri (strain ATCC 35101 / DSM 1498 / JR1) protein is Riboflavin kinase (ribK).